The sequence spans 82 residues: Precursor of CEP3 (82 aa).

An N-terminal signal peptide occupies residues 1-24; sequence MATINVYVFAFIFLLTISVGSIEG. A propeptide spanning residues 25 to 63 is cleaved from the precursor; it reads RKLTKFTVTTSEEIRAGGSVLSSSPPTEPLESPPSHGVD. The tract at residues 40–82 is disordered; the sequence is AGGSVLSSSPPTEPLESPPSHGVDTFRPTEPGHSPGIGHSVHN. P67, P70, and P74 each carry hydroxyproline. The propeptide occupies 79–82; it reads SVHN.

The protein belongs to the C-terminally encoded plant signaling peptide (CEP) family. In terms of assembly, interacts with the CEP receptor CEPR1. Post-translationally, the mature small signaling peptide is generated by proteolytic processing of the longer precursor. In terms of tissue distribution, mostly expressed in roots. Present in lateral roots (especially in vasculature), root-hypocotyl junction and cotyledons.

Its subcellular location is the secreted. The protein localises to the extracellular space. It is found in the apoplast. Its function is as follows. Extracellular signaling peptide that represses primary root growth rate and significantly inhibits lateral root formation. Promotes shoot growth. Modulates leaf morphology. Regulates systemic nitrogen (N)-demand signaling. Mediates systemic up-regulation of genes involved in N uptake and assimilation pathways. This is Precursor of CEP3 from Arabidopsis thaliana (Mouse-ear cress).